The chain runs to 114 residues: UPF0342 protein PEPE_0673 (114 aa).

Belongs to the UPF0342 family.

The protein is UPF0342 protein PEPE_0673 of Pediococcus pentosaceus (strain ATCC 25745 / CCUG 21536 / LMG 10740 / 183-1w).